We begin with the raw amino-acid sequence, 632 residues long: Threonine--tRNA ligase (632 aa).

Residues 1 to 59 (MIRITFLAKQKVEEYSSRVTGFDILQPDISKEAIALRVNGELYDLSREIESDTEIDVIQ) enclose the TGS domain. The catalytic stretch occupies residues 240-532 (DHRRIAKDMD…LIEHYAGKFP (293 aa)). Residues Cys332, His383, and His509 each coordinate Zn(2+).

This sequence belongs to the class-II aminoacyl-tRNA synthetase family. As to quaternary structure, homodimer. Zn(2+) serves as cofactor.

The protein resides in the cytoplasm. The catalysed reaction is tRNA(Thr) + L-threonine + ATP = L-threonyl-tRNA(Thr) + AMP + diphosphate + H(+). Functionally, catalyzes the attachment of threonine to tRNA(Thr) in a two-step reaction: L-threonine is first activated by ATP to form Thr-AMP and then transferred to the acceptor end of tRNA(Thr). Also edits incorrectly charged L-seryl-tRNA(Thr). The polypeptide is Threonine--tRNA ligase (Wolbachia sp. subsp. Brugia malayi (strain TRS)).